The primary structure comprises 235 residues: Serine protease SplA (235 aa).

Positions 1 to 35 (MNKNVMVKGLTALDILTSLGCAENISDQPHSIAKA) are cleaved as a signal peptide. Active-site charge relay system residues include His74, Asp113, and Ser189.

It belongs to the peptidase S1B family.

It localises to the secreted. The protein is Serine protease SplA (splA) of Staphylococcus aureus.